A 336-amino-acid polypeptide reads, in one-letter code: Holliday junction branch migration complex subunit RuvB (336 aa).

A large ATPase domain (RuvB-L) region spans residues 4-184; sequence ADRLISASGG…FGIVQRLEFY (181 aa). ATP is bound by residues I23, R24, G65, K68, T69, T70, 131–133, R174, Y184, and R221; that span reads EDY. T69 serves as a coordination point for Mg(2+). The small ATPAse domain (RuvB-S) stretch occupies residues 185–255; sequence NVKDLTDIVA…IAARAMDMLD (71 aa). The head domain (RuvB-H) stretch occupies residues 258–336; the sequence is NEGFDFMDRK…HFGLQRPDEG (79 aa). DNA-binding residues include R313 and R318.

This sequence belongs to the RuvB family. In terms of assembly, homohexamer. Forms an RuvA(8)-RuvB(12)-Holliday junction (HJ) complex. HJ DNA is sandwiched between 2 RuvA tetramers; dsDNA enters through RuvA and exits via RuvB. An RuvB hexamer assembles on each DNA strand where it exits the tetramer. Each RuvB hexamer is contacted by two RuvA subunits (via domain III) on 2 adjacent RuvB subunits; this complex drives branch migration. In the full resolvosome a probable DNA-RuvA(4)-RuvB(12)-RuvC(2) complex forms which resolves the HJ.

It is found in the cytoplasm. The enzyme catalyses ATP + H2O = ADP + phosphate + H(+). Its function is as follows. The RuvA-RuvB-RuvC complex processes Holliday junction (HJ) DNA during genetic recombination and DNA repair, while the RuvA-RuvB complex plays an important role in the rescue of blocked DNA replication forks via replication fork reversal (RFR). RuvA specifically binds to HJ cruciform DNA, conferring on it an open structure. The RuvB hexamer acts as an ATP-dependent pump, pulling dsDNA into and through the RuvAB complex. RuvB forms 2 homohexamers on either side of HJ DNA bound by 1 or 2 RuvA tetramers; 4 subunits per hexamer contact DNA at a time. Coordinated motions by a converter formed by DNA-disengaged RuvB subunits stimulates ATP hydrolysis and nucleotide exchange. Immobilization of the converter enables RuvB to convert the ATP-contained energy into a lever motion, pulling 2 nucleotides of DNA out of the RuvA tetramer per ATP hydrolyzed, thus driving DNA branch migration. The RuvB motors rotate together with the DNA substrate, which together with the progressing nucleotide cycle form the mechanistic basis for DNA recombination by continuous HJ branch migration. Branch migration allows RuvC to scan DNA until it finds its consensus sequence, where it cleaves and resolves cruciform DNA. The protein is Holliday junction branch migration complex subunit RuvB of Aeromonas hydrophila subsp. hydrophila (strain ATCC 7966 / DSM 30187 / BCRC 13018 / CCUG 14551 / JCM 1027 / KCTC 2358 / NCIMB 9240 / NCTC 8049).